Consider the following 467-residue polypeptide: 3-isopropylmalate dehydratase large subunit (467 aa).

[4Fe-4S] cluster is bound by residues Cys-348, Cys-409, and Cys-412.

Belongs to the aconitase/IPM isomerase family. LeuC type 1 subfamily. As to quaternary structure, heterodimer of LeuC and LeuD. Requires [4Fe-4S] cluster as cofactor.

It carries out the reaction (2R,3S)-3-isopropylmalate = (2S)-2-isopropylmalate. It functions in the pathway amino-acid biosynthesis; L-leucine biosynthesis; L-leucine from 3-methyl-2-oxobutanoate: step 2/4. Its function is as follows. Catalyzes the isomerization between 2-isopropylmalate and 3-isopropylmalate, via the formation of 2-isopropylmaleate. This chain is 3-isopropylmalate dehydratase large subunit, found in Magnetococcus marinus (strain ATCC BAA-1437 / JCM 17883 / MC-1).